The following is a 264-amino-acid chain: Type 1 encapsulin shell protein (264 aa).

The protein belongs to the encapsulin family. Family 1 subfamily. In terms of assembly, forms hollow shells composed of 60 subunits. Monomers probably form pentamers which assemble into the shell. There are 12 pores where the pentamers meet as well as 3-fold axis channels and dimer channels; none are larger than 3-4 Angstroms in diameter. The N-terminus of the protein is inside the shell, the C-terminus is outside.

Its subcellular location is the encapsulin nanocompartment. In terms of biological role, shell component of a type 1 encapsulin nanocompartment. Assembles into proteinaceous shells 21-24 nm in diameter. Empty organelles can be expressed in E.coli. Cargo proteins (DypB) are targeted to the interior via their C-terminal extensions. This is Type 1 encapsulin shell protein from Rhodococcus erythropolis (strain PR4 / NBRC 100887).